The chain runs to 83 residues: Small ribosomal subunit protein bS16c (83 aa).

This sequence belongs to the bacterial ribosomal protein bS16 family.

It is found in the plastid. The protein localises to the chloroplast. The protein is Small ribosomal subunit protein bS16c of Chaetosphaeridium globosum (Charophycean green alga).